The primary structure comprises 253 residues: Salivary gland SP38-40.B protein (253 aa).

The N-terminal stretch at 1–21 (MRIKFLVVLAVICLLAHYASA) is a signal peptide. Disordered regions lie at residues 23–51 (GMGGDKKPKDAPKPKDAPKPKEVKPVKAD), 140–168 (KDEKKEKKVVKVIKPPKEKPPKKPRKECS), and 203–253 (VQGK…DAKK). Composition is skewed to basic and acidic residues over residues 26 to 51 (GDKKPKDAPKPKDAPKPKEVKPVKAD) and 154 to 168 (PPKEKPPKKPRKECS). 2 tandem repeats follow at residues 29–34 (KPKDAP) and 35–40 (KPKDAP). A 3 X 6 AA approximate tandem repeats of K-P-K-D-A-P region spans residues 29 to 47 (KPKDAPKPKDAPKPKEVKP). The 1-3; approximate repeat unit spans residues 41-47 (KPKEVKP). 2 tandem repeats follow at residues 153–156 (KPPK) and 158–161 (KPPK). The segment at 153 to 166 (KPPKEKPPKKPRKE) is 3 X 4 AA approximate tandem repeats of K-P-P-K. Residues 162 to 166 (KPRKE) form a 2-3; approximate repeat. Residues 206–217 (KQKKGAKKAKGG) are compositionally biased toward basic residues. Tandem repeats lie at residues 222-225 (PKPG), 226-229 (PKPA), 230-233 (PKPG), 234-237 (PKPA), 238-241 (PKPV), and 242-245 (PKPA). Residues 222 to 249 (PKPGPKPAPKPGPKPAPKPVPKPADKPK) are 7 X 4 AA approximate tandem repeats of P-K-P-[GAV]. The span at 225 to 243 (GPKPAPKPGPKPAPKPVPK) shows a compositional bias: pro residues. Basic and acidic residues predominate over residues 244–253 (PADKPKDAKK). The stretch at 246-249 (DKPK) is one 3-7; approximate repeat.

In terms of tissue distribution, salivary gland.

The protein localises to the secreted. Functionally, used by the larvae to construct a supramolecular structure, the larval tube. This chain is Salivary gland SP38-40.B protein (SP38-40.B), found in Chironomus tentans (Midge).